The chain runs to 338 residues: Holliday junction branch migration complex subunit RuvB (338 aa).

Residues 1–181 (MTRTITPSIT…FGVISRLEFY (181 aa)) are large ATPase domain (RuvB-L). Residues L20, R21, G62, K65, T66, T67, 128–130 (EDF), R171, Y181, and R218 contribute to the ATP site. T66 serves as a coordination point for Mg(2+). Positions 182–252 (TDEELAFIIT…VVQDALALLE (71 aa)) are small ATPAse domain (RuvB-S). Positions 255-338 (EMGFDQMDRM…VPEPPQGKLF (84 aa)) are head domain (RuvB-H). Residues R310 and R315 each coordinate DNA.

Belongs to the RuvB family. As to quaternary structure, homohexamer. Forms an RuvA(8)-RuvB(12)-Holliday junction (HJ) complex. HJ DNA is sandwiched between 2 RuvA tetramers; dsDNA enters through RuvA and exits via RuvB. An RuvB hexamer assembles on each DNA strand where it exits the tetramer. Each RuvB hexamer is contacted by two RuvA subunits (via domain III) on 2 adjacent RuvB subunits; this complex drives branch migration. In the full resolvosome a probable DNA-RuvA(4)-RuvB(12)-RuvC(2) complex forms which resolves the HJ.

The protein resides in the cytoplasm. It catalyses the reaction ATP + H2O = ADP + phosphate + H(+). Functionally, the RuvA-RuvB-RuvC complex processes Holliday junction (HJ) DNA during genetic recombination and DNA repair, while the RuvA-RuvB complex plays an important role in the rescue of blocked DNA replication forks via replication fork reversal (RFR). RuvA specifically binds to HJ cruciform DNA, conferring on it an open structure. The RuvB hexamer acts as an ATP-dependent pump, pulling dsDNA into and through the RuvAB complex. RuvB forms 2 homohexamers on either side of HJ DNA bound by 1 or 2 RuvA tetramers; 4 subunits per hexamer contact DNA at a time. Coordinated motions by a converter formed by DNA-disengaged RuvB subunits stimulates ATP hydrolysis and nucleotide exchange. Immobilization of the converter enables RuvB to convert the ATP-contained energy into a lever motion, pulling 2 nucleotides of DNA out of the RuvA tetramer per ATP hydrolyzed, thus driving DNA branch migration. The RuvB motors rotate together with the DNA substrate, which together with the progressing nucleotide cycle form the mechanistic basis for DNA recombination by continuous HJ branch migration. Branch migration allows RuvC to scan DNA until it finds its consensus sequence, where it cleaves and resolves cruciform DNA. This chain is Holliday junction branch migration complex subunit RuvB, found in Geotalea uraniireducens (strain Rf4) (Geobacter uraniireducens).